A 192-amino-acid polypeptide reads, in one-letter code: uncharacterized protein (192 aa).

The 132-residue stretch at 29 to 160 (HRQAAVLIPI…PLDIYRRGDS (132 aa)) folds into the Nudix hydrolase domain. Positions 67–89 (GAVDDTDASAIAAALREAEEEVA) match the Nudix box motif. Mg(2+)-binding residues include E83 and E87.

The protein belongs to the Nudix hydrolase family. PCD1 subfamily. Requires Mn(2+) as cofactor. Mg(2+) serves as cofactor.

In terms of biological role, probably mediates the hydrolysis of some nucleoside diphosphate derivatives. This is an uncharacterized protein from Escherichia coli (strain K12).